The sequence spans 302 residues: MLRLRCKARSGTQPLPGLTAHSRLRDMQAALAALTGVPAPAQRLLLGFPPRSLDLSDGERRLGELGIHSGDTLIVEEDTSKPSAGSPVVAKRTMAVREAVPVLARRVVPADNSCLFTSVYYVVEGGVYDPGCAPEMRSLIAQIVASDPEAYCEAVLGKTNREYCEWIRREETWGGAIEVSILSKFYQCEICVVDTQTVRIDRFGEDAGYTKRVLLIYDGIHYDPLERKIPDSDVPPQTIFSTTDDVVLAQALELADEARRKRQFTDVNRFTLRCMVCQKGLTGQVEAREHAKETGHTNFGEV.

A UBX-like region spans residues 5–83 (RCKARSGTQP…IVEEDTSKPS (79 aa)). Positions 103-228 (LARRVVPADN…GIHYDPLERK (126 aa)) constitute an OTU domain. Positions 108-114 (VPADNSC) are cys-loop. Aspartate 111 is an active-site residue. Residue cysteine 114 is the Nucleophile of the active site. Positions 167–177 (IRREETWGGAI) are variable-loop. A his-loop region spans residues 217-221 (YDGIH). Residue isoleucine 220 coordinates substrate. Histidine 221 is an active-site residue. Residues 245–250 (DVVLAQ) form an S2 site region. The C2H2-type zinc-finger motif lies at 272–296 (LRCMVCQKGLTGQVEAREHAKETGH). Histidine 296 is an active-site residue.

Its subcellular location is the cytoplasm. The enzyme catalyses Thiol-dependent hydrolysis of ester, thioester, amide, peptide and isopeptide bonds formed by the C-terminal Gly of ubiquitin (a 76-residue protein attached to proteins as an intracellular targeting signal).. Its function is as follows. Hydrolase that can remove conjugated ubiquitin from proteins and participates in endoplasmic reticulum-associated degradation (ERAD) for misfolded lumenal proteins. May act by triming the ubiquitin chain on the associated substrate to facilitate their threading through the VCP/p97 pore. Ubiquitin moieties on substrates may present a steric impediment to the threading process when the substrate is transferred to the VCP pore and threaded through VCP's axial channel. Mediates deubiquitination of 'Lys-27'-, 'Lys-29'- and 'Lys-33'-linked polyubiquitin chains. Also able to hydrolyze 'Lys-11'-linked ubiquitin chains. Cleaves both polyubiquitin and di-ubiquitin. In Gallus gallus (Chicken), this protein is Ubiquitin thioesterase OTU1 (YOD1).